The primary structure comprises 293 residues: Inner membrane ABC transporter permease protein YcjO (293 aa).

Topologically, residues 1–12 (MNRLFSGRSDMP) are periplasmic. Residues 13 to 33 (FALLLLAPSLLLLGGLVAWPM) traverse the membrane as a helical segment. Residues 34–77 (VSNIEISFLRLPLNPNIESTFVGVSNYVRILSDPGFWHSLWMTV) lie on the Cytoplasmic side of the membrane. Residues 73–283 (LWMTVWYTAL…IIIFAVILLT (211 aa)) enclose the ABC transmembrane type-1 domain. A helical membrane pass occupies residues 78-98 (WYTALVVAGSTVLGLAVAMFF). At 99–110 (NREFRLRKTARS) the chain is on the periplasmic side. A helical transmembrane segment spans residues 111-131 (LVILSYVTPSISLVFAWKYMF). The Cytoplasmic portion of the chain corresponds to 132–135 (NNGY). Residues 136-156 (GIVNYLGVDLLHLYEQAPLWF) traverse the membrane as a helical segment. The Periplasmic segment spans residues 157–162 (DNPGSS). A helical membrane pass occupies residues 163–183 (FVLVVLFAIWRYFPYAFISFL). Topologically, residues 184–214 (AILQTIDKSLYEAAEMDGANAWQRFRIVTLP) are cytoplasmic. A helical membrane pass occupies residues 215–235 (AIMPVLATVVTLRTIWMFYMF). At 236 to 261 (ADVYLLTTKVDILGVYLYKTAFAFND) the chain is on the periplasmic side. The helical transmembrane segment at 262–282 (LGKAAAISVVLFIIIFAVILL) threads the bilayer. Topologically, residues 283–293 (TRKRVNLNGNK) are cytoplasmic.

Belongs to the binding-protein-dependent transport system permease family. MalFG subfamily.

The protein localises to the cell inner membrane. Functionally, probably part of the binding-protein-dependent transport system YcjNOP. Probably responsible for the translocation of the substrate across the membrane. The chain is Inner membrane ABC transporter permease protein YcjO (ycjO) from Escherichia coli (strain K12).